The primary structure comprises 254 residues: Transcription factor bHLH51 (254 aa).

A bHLH domain is found at 62 to 111; that stretch reads SLSRSHRLAEKRRRDRINSHLTALRKLVPNSDKLDKAALLATVIEQVKEL.

Homodimer. Expressed constitutively in roots, stems, and flowers.

The protein resides in the nucleus. The chain is Transcription factor bHLH51 (BHLH51) from Arabidopsis thaliana (Mouse-ear cress).